The following is a 551-amino-acid chain: Colicin-E6 (551 aa).

Disordered regions lie at residues 1-74 (MSGG…SGGG), 244-269 (LSPG…NTRD), 293-317 (PDQV…HPVE), 406-501 (NKQA…WYGD), and 517-551 (EGYR…KKYL). Residues 20–35 (INGGPTGLGVGGGASD) show a composition bias toward gly residues. Positions 36-45 (GSGWSSENNP) are enriched in low complexity. Residues 46 to 74 (WGGGSGSGIHWGGGSGHGNGGGNGNSGGG) show a composition bias toward gly residues. Basic and acidic residues-rich tracts occupy residues 296–317 (VKQR…HPVE) and 430–484 (ESRK…EGKP). Positions 455-551 (KGVKDYGHDY…DPKRNIKKYL (97 aa)) are ribosome inactivating activity. Residues 530 to 551 (FEPKTGNQLKGPDPKRNIKKYL) are binding of immunity protein.

It belongs to the cloacin colicin family.

Functionally, inactivates ribosomes by hydrolyzing 16S RNA in 30S ribosomes at a specific site. Colicins are polypeptide toxins produced by and active against E.coli and closely related bacteria. The protein is Colicin-E6 of Escherichia coli.